The following is a 521-amino-acid chain: Histidine--tRNA ligase (521 aa).

L-histidine is bound by residues 137–139 (DLT), Arg164, Gln180, Asp184, Arg338, and 342–343 (YY).

This sequence belongs to the class-II aminoacyl-tRNA synthetase family.

It carries out the reaction tRNA(His) + L-histidine + ATP = L-histidyl-tRNA(His) + AMP + diphosphate + H(+). Functionally, involved in protein synthesis. Catalyzes the specific attachment of an amino acid to its cognate tRNA in a 2 step reaction: the amino acid (AA) is first activated by ATP to form AA-AMP and then transferred to the acceptor end of the tRNA. Required for germ cell development. This Caenorhabditis elegans protein is Histidine--tRNA ligase.